We begin with the raw amino-acid sequence, 820 residues long: Leucine-rich repeat and guanylate kinase domain-containing protein (820 aa).

Residues 72-83 (EAEAEQEEKQQE) are compositionally biased toward basic and acidic residues. Residues 72–96 (EAEAEQEEKQQEDGESEESEESEMQ) form a disordered region. The segment covering 84–94 (DGESEESEESE) has biased composition (acidic residues). LRR repeat units lie at residues 129–149 (YLNL…CGYV), 150–171 (HLQK…SCMP), 172–193 (YLLE…KPPQ), 194–215 (NLKK…SAYH), 216–237 (TLTQ…ENCI), 238–259 (SLTH…GTLP), 260–280 (IKVL…EELK), 281–302 (ALQN…ENHD), and 303–324 (LLEV…EYIE). The LRRCT domain maps to 337–375 (NPIQTKPEYWFFVIYMLLRLTELDQQKIKVEEKVFAVNK). In terms of domain architecture, Guanylate kinase-like spans 414–597 (YPMLILTGPA…AYQKLSELIR (184 aa)). 421-428 (GPAACGKR) contacts ATP. Positions 800-820 (TIMDPGSNTKPTLPPIPHGRR) are disordered. Pro residues predominate over residues 811–820 (TLPPIPHGRR).

In terms of assembly, interacts (via guanylate kinase-like domain) with RIMBP3 (via coiled-coil region). Interacts (via guanylate kinase-like domain) with HOOK2. Interacts (via LRRCT domain) with KLC3. Interacts with HOOK1 and HOOK3. Highly expressed in the testis. During spermatid development is initially localized to a supra-nuclear region of round spermatids, and is particularly evident at the leading edge of the developing acrosome and acroplaxome. As maturation proceeded and nuclear elongation initiated, LRGUK moves distally to ultimately reside on the microtubules of the manchette. LRGUK is also evident in the sperm basal body and the sperm tail.

It localises to the cytoplasmic vesicle. Its subcellular location is the secretory vesicle. The protein resides in the acrosome. It is found in the cytoplasm. The protein localises to the cytoskeleton. It localises to the cilium basal body. In terms of biological role, involved in multiple aspects of sperm assembly including acrosome attachment, shaping of the sperm head and in the early aspects of axoneme development. Not essential for primary cilium biogenesis. This Mus musculus (Mouse) protein is Leucine-rich repeat and guanylate kinase domain-containing protein (Lrguk).